The following is a 246-amino-acid chain: 1-(5-phosphoribosyl)-5-[(5-phosphoribosylamino)methylideneamino] imidazole-4-carboxamide isomerase (246 aa).

The Proton acceptor role is filled by aspartate 8. Aspartate 131 acts as the Proton donor in catalysis.

The protein belongs to the HisA/HisF family.

The protein resides in the cytoplasm. It carries out the reaction 1-(5-phospho-beta-D-ribosyl)-5-[(5-phospho-beta-D-ribosylamino)methylideneamino]imidazole-4-carboxamide = 5-[(5-phospho-1-deoxy-D-ribulos-1-ylimino)methylamino]-1-(5-phospho-beta-D-ribosyl)imidazole-4-carboxamide. It participates in amino-acid biosynthesis; L-histidine biosynthesis; L-histidine from 5-phospho-alpha-D-ribose 1-diphosphate: step 4/9. This is 1-(5-phosphoribosyl)-5-[(5-phosphoribosylamino)methylideneamino] imidazole-4-carboxamide isomerase from Polaromonas naphthalenivorans (strain CJ2).